The primary structure comprises 244 residues: Ribosomal RNA large subunit methyltransferase E (244 aa).

Positions 1-23 are disordered; it reads MATGGKKSAGRTTGSGPAGGSRN. The S-adenosyl-L-methionine site is built by Gly91, Trp93, Asp116, Asp132, and Asp156. The active-site Proton acceptor is the Lys196.

This sequence belongs to the class I-like SAM-binding methyltransferase superfamily. RNA methyltransferase RlmE family.

It is found in the cytoplasm. The catalysed reaction is uridine(2552) in 23S rRNA + S-adenosyl-L-methionine = 2'-O-methyluridine(2552) in 23S rRNA + S-adenosyl-L-homocysteine + H(+). Specifically methylates the uridine in position 2552 of 23S rRNA at the 2'-O position of the ribose in the fully assembled 50S ribosomal subunit. This is Ribosomal RNA large subunit methyltransferase E from Paramagnetospirillum magneticum (strain ATCC 700264 / AMB-1) (Magnetospirillum magneticum).